Here is a 271-residue protein sequence, read N- to C-terminus: NADPH-dependent 7-cyano-7-deazaguanine reductase (271 aa).

81 to 83 (IES) is a substrate binding site. Residue 83–84 (SK) participates in NADPH binding. C177 functions as the Thioimide intermediate in the catalytic mechanism. D184 acts as the Proton donor in catalysis. 216 to 217 (HE) provides a ligand contact to substrate. An NADPH-binding site is contributed by 245 to 246 (RG).

Belongs to the GTP cyclohydrolase I family. QueF type 2 subfamily. Homodimer.

The protein localises to the cytoplasm. The catalysed reaction is 7-aminomethyl-7-carbaguanine + 2 NADP(+) = 7-cyano-7-deazaguanine + 2 NADPH + 3 H(+). The protein operates within tRNA modification; tRNA-queuosine biosynthesis. Its function is as follows. Catalyzes the NADPH-dependent reduction of 7-cyano-7-deazaguanine (preQ0) to 7-aminomethyl-7-deazaguanine (preQ1). This chain is NADPH-dependent 7-cyano-7-deazaguanine reductase, found in Xanthomonas campestris pv. campestris (strain B100).